Reading from the N-terminus, the 328-residue chain is Malate dehydrogenase (328 aa).

An NAD(+)-binding site is contributed by 12-18 (GAAGQIA). The substrate site is built by Arg-93 and Arg-99. NAD(+) contacts are provided by residues Asn-106, Gln-113, and 130–132 (VGN). The substrate site is built by Asn-132 and Arg-163. His-188 acts as the Proton acceptor in catalysis.

It belongs to the LDH/MDH superfamily. MDH type 2 family.

It carries out the reaction (S)-malate + NAD(+) = oxaloacetate + NADH + H(+). Functionally, catalyzes the reversible oxidation of malate to oxaloacetate. The chain is Malate dehydrogenase from Burkholderia lata (strain ATCC 17760 / DSM 23089 / LMG 22485 / NCIMB 9086 / R18194 / 383).